The chain runs to 330 residues: Phenylalanine--tRNA ligase alpha subunit (330 aa).

Glutamate 246 provides a ligand contact to Mg(2+).

It belongs to the class-II aminoacyl-tRNA synthetase family. Phe-tRNA synthetase alpha subunit type 1 subfamily. As to quaternary structure, tetramer of two alpha and two beta subunits. Mg(2+) is required as a cofactor.

Its subcellular location is the cytoplasm. The enzyme catalyses tRNA(Phe) + L-phenylalanine + ATP = L-phenylalanyl-tRNA(Phe) + AMP + diphosphate + H(+). The chain is Phenylalanine--tRNA ligase alpha subunit from Campylobacter jejuni subsp. doylei (strain ATCC BAA-1458 / RM4099 / 269.97).